Reading from the N-terminus, the 700-residue chain is Choline transporter-like protein 5-B (700 aa).

The Cytoplasmic portion of the chain corresponds to 1–4 (GCTD). The chain crosses the membrane as a helical span at residues 5 to 25 (VLCCVIFVIVILGYIVLGTVA). At 26 to 209 (WMHGDPRKVV…KIFEDYASSW (184 aa)) the chain is on the extracellular side. Asn157 and Asn164 each carry an N-linked (GlcNAc...) asparagine glycan. A helical membrane pass occupies residues 210-230 (FWILIGLVISMLVSLVFILLL). Residues 231-233 (RFT) lie on the Cytoplasmic side of the membrane. The chain crosses the membrane as a helical span at residues 234–254 (AGVLFWLVIFGVIAAVGYGIW). Residues 255 to 292 (HCYWEYSSLKGKPDSDVTISDIGFQTDFRVYLQLSQTW) are Extracellular-facing. The helical transmembrane segment at 293 to 313 (LIFMTSLAVIEAIIILVLIFL) threads the bilayer. Residues 314-341 (RNRVRIAIALLKEGSKAIGCIMSTLFYP) lie on the Cytoplasmic side of the membrane. The chain crosses the membrane as a helical span at residues 342 to 362 (IITFLLLALCIAYWAVTAVFL). The Extracellular portion of the chain corresponds to 363 to 432 (ASSGEAVYKV…LQLCNLLVFL (70 aa)). Asn383 and Asn395 each carry an N-linked (GlcNAc...) asparagine glycan. Residues 433–455 (WLVNFTIALGQCTLAGAFAAYYW) traverse the membrane as a helical segment. The Cytoplasmic portion of the chain corresponds to 456-482 (ALRKPADIPPCPLASSFGRALRYHTGS). Residues 483–503 (LAFGALILSIVQFIRIILEYL) form a helical membrane-spanning segment. Residues 504-541 (DHKLKGAHNAFTRFLLCCLKCCFWCLEHFIKFMNRNAY) are Extracellular-facing. A helical transmembrane segment spans residues 542–562 (IMISIYGKNFCTSARDAFFLL). At 563–577 (MRNVMRVAVLDKVTD) the chain is on the cytoplasmic side. A helical transmembrane segment spans residues 578-598 (FLLFLGKLLISGSVGVLAFFF). Over 599–616 (FTRQIPVIQEEVPSLNYY) the chain is Extracellular. A helical membrane pass occupies residues 617-637 (WVPLLTVIFGSYMIAHGFFNV). The Cytoplasmic segment spans residues 638-687 (YAMCVDTLFLCFLLDLEKNDGSATRPYYMCSSLRAILNKKNQKRPKETKR). The segment at 676-700 (KKNQKRPKETKRGRKQKKEQPKSRH) is disordered. A compositionally biased stretch (basic residues) spans 677 to 692 (KNQKRPKETKRGRKQK).

It belongs to the CTL (choline transporter-like) family.

It localises to the cell membrane. The enzyme catalyses choline(out) + n H(+)(in) = choline(in) + n H(+)(out). Its function is as follows. Choline/H+ antiporter. This Danio rerio (Zebrafish) protein is Choline transporter-like protein 5-B (slc44a5b).